Reading from the N-terminus, the 36-residue chain is Cytochrome b6-f complex subunit 5 (36 aa).

A helical transmembrane segment spans residues 5-25 (LLSGIVLGLIPITILGLLMAA).

This sequence belongs to the PetG family. As to quaternary structure, the 4 large subunits of the cytochrome b6-f complex are cytochrome b6, subunit IV (17 kDa polypeptide, PetD), cytochrome f and the Rieske protein, while the 4 small subunits are PetG, PetL, PetM and PetN. The complex functions as a dimer.

Its subcellular location is the plastid. It localises to the chloroplast thylakoid membrane. Functionally, component of the cytochrome b6-f complex, which mediates electron transfer between photosystem II (PSII) and photosystem I (PSI), cyclic electron flow around PSI, and state transitions. PetG is required for either the stability or assembly of the cytochrome b6-f complex. This Cyanidioschyzon merolae (strain NIES-3377 / 10D) (Unicellular red alga) protein is Cytochrome b6-f complex subunit 5.